The following is a 687-amino-acid chain: Tripartite terminase subunit 3 (687 aa).

The tract at residues 67-91 is disordered; sequence HHPATPTSANPDVGTPRPSEDNVPA. Positions 221-228 match the Walker A motif motif; sequence IPRRHGKT. A Walker B motif motif is present at residues 316-321; it reads LLYVDE. Glu321 (for ATPase activity) is an active-site residue. Residues Asp476, Glu550, and Asp662 each act as for nuclease activity in the active site.

Belongs to the herpesviridae TRM3 protein family. In terms of assembly, interacts with the terminase subunits TRM1 and TRM2. Interacts with portal protein.

Its subcellular location is the host nucleus. In terms of biological role, component of the molecular motor that translocates viral genomic DNA in empty capsid during DNA packaging. Forms a tripartite terminase complex together with TRM1 and TRM2 in the host cytoplasm. Once the complex reaches the host nucleus, it interacts with the capsid portal vertex. This portal forms a ring in which genomic DNA is translocated into the capsid. TRM3 carries an RNase H-like nuclease activity that plays an important role for the cleavage of concatemeric viral DNA into unit length genomes. This chain is Tripartite terminase subunit 3, found in Human herpesvirus 8 type P (isolate GK18) (HHV-8).